We begin with the raw amino-acid sequence, 272 residues long: Small ribosomal subunit protein uS2 (272 aa).

Residues 224 to 233 (EGKKAREERQ) show a composition bias toward basic and acidic residues. The disordered stretch occupies residues 224–272 (EGKKAREERQLAAAKDAAGDAKPEAEEAPAAAEAEEAPAAEAEEAPAAE). Positions 256–272 (EAEEAPAAEAEEAPAAE) are enriched in acidic residues.

It belongs to the universal ribosomal protein uS2 family.

The chain is Small ribosomal subunit protein uS2 from Corynebacterium glutamicum (strain ATCC 13032 / DSM 20300 / JCM 1318 / BCRC 11384 / CCUG 27702 / LMG 3730 / NBRC 12168 / NCIMB 10025 / NRRL B-2784 / 534).